The chain runs to 144 residues: Ribosomal RNA large subunit methyltransferase H (144 aa).

Residues Leu63, Gly92, and 111–116 contribute to the S-adenosyl-L-methionine site; that span reads LSPMTF.

The protein belongs to the RNA methyltransferase RlmH family. In terms of assembly, homodimer.

It is found in the cytoplasm. The enzyme catalyses pseudouridine(1915) in 23S rRNA + S-adenosyl-L-methionine = N(3)-methylpseudouridine(1915) in 23S rRNA + S-adenosyl-L-homocysteine + H(+). Specifically methylates the pseudouridine at position 1915 (m3Psi1915) in 23S rRNA. This Synechococcus sp. (strain CC9605) protein is Ribosomal RNA large subunit methyltransferase H.